We begin with the raw amino-acid sequence, 425 residues long: Sensor histidine kinase NarS (425 aa).

Transmembrane regions (helical) follow at residues 42–62, 71–91, 107–127, 130–150, 155–175, and 181–201; these read IASV…VVGT, IVLI…AYSA, LEPF…QLLS, GIYP…DVST, VVLA…PVML, and PETI…LMVV. Positions 224–425 constitute a Histidine kinase domain; the sequence is QTMTASEVLQ…HVCVELPLKR (202 aa). Residue histidine 241 is modified to Phosphohistidine; by autocatalysis.

Post-translationally, autophosphorylated on His-241.

The protein localises to the cell membrane. The enzyme catalyses ATP + protein L-histidine = ADP + protein N-phospho-L-histidine.. Its function is as follows. Member of the two-component regulatory system NarS/NarL involved in gene expression during aerobic nitrate metabolism. Plays therefore a crucial role in anaerobic survival of mycobacteria in host. Functions as a sensor protein kinase which is autophosphorylated at a histidine residue and transfers its phosphate group to the conserved aspartic acid residue in the regulatory domain of NarL. In turn, NarL binds to the upstream promoter regions of target genes to regulate their expression during aerobic nitrate metabolism. The chain is Sensor histidine kinase NarS from Mycobacterium tuberculosis (strain ATCC 25618 / H37Rv).